The sequence spans 635 residues: Extracellular metalloproteinase mep (635 aa).

The signal sequence occupies residues 1–19 (MMRGLLLAGALGLPLAVLA). The propeptide occupies 20–246 (HPTHHAHGLQ…VHGVVDYVAE (227 aa)). Asn287 carries N-linked (GlcNAc...) asparagine glycosylation. Residues 290–309 (TTRGNNGIAQSNPTGGSQYL) show a composition bias toward polar residues. The disordered stretch occupies residues 290 to 311 (TTRGNNGIAQSNPTGGSQYLKN). His430 serves as a coordination point for Zn(2+). Residue Glu431 is part of the active site. Residue His434 coordinates Zn(2+).

Belongs to the peptidase M36 family. It depends on Zn(2+) as a cofactor.

Its subcellular location is the secreted. In terms of biological role, secreted metalloproteinase that allows assimilation of proteinaceous substrates. The protein is Extracellular metalloproteinase mep (mep) of Aspergillus flavus (strain ATCC 200026 / FGSC A1120 / IAM 13836 / NRRL 3357 / JCM 12722 / SRRC 167).